The following is a 387-amino-acid chain: uncharacterized protein (387 aa).

The protein localises to the mitochondrion. This is an uncharacterized protein from Paramecium tetraurelia.